The sequence spans 61 residues: Cobrotoxin-b (61 aa).

4 cysteine pairs are disulfide-bonded: Cys-3–Cys-23, Cys-17–Cys-40, Cys-42–Cys-53, and Cys-54–Cys-59.

This sequence belongs to the three-finger toxin family. Short-chain subfamily. Type I alpha-neurotoxin sub-subfamily. In terms of tissue distribution, expressed by the venom gland.

The protein resides in the secreted. Functionally, produces peripheral paralysis by blocking neuromuscular transmission at the postsynaptic site. Binds to the nicotinic acetylcholine receptor. This is Cobrotoxin-b from Naja kaouthia (Monocled cobra).